A 127-amino-acid chain; its full sequence is Fluoride-specific ion channel FluC (127 aa).

A run of 2 helical transmembrane segments spans residues 4–24 (WFWI…LSTW) and 36–56 (GTLA…EIAA). Positions 75 and 78 each coordinate Na(+). The helical transmembrane segment at 100–120 (LANIAITLVVCLLAGVLGMVV) threads the bilayer.

The protein belongs to the fluoride channel Fluc/FEX (TC 1.A.43) family.

It is found in the cell inner membrane. It catalyses the reaction fluoride(in) = fluoride(out). Na(+) is not transported, but it plays an essential structural role and its presence is essential for fluoride channel function. Functionally, fluoride-specific ion channel. Important for reducing fluoride concentration in the cell, thus reducing its toxicity. This Sorangium cellulosum (strain So ce56) (Polyangium cellulosum (strain So ce56)) protein is Fluoride-specific ion channel FluC.